Consider the following 94-residue polypeptide: Pyrimidine/purine nucleoside phosphorylase (94 aa).

It belongs to the nucleoside phosphorylase PpnP family.

The catalysed reaction is a purine D-ribonucleoside + phosphate = a purine nucleobase + alpha-D-ribose 1-phosphate. The enzyme catalyses adenosine + phosphate = alpha-D-ribose 1-phosphate + adenine. It carries out the reaction cytidine + phosphate = cytosine + alpha-D-ribose 1-phosphate. It catalyses the reaction guanosine + phosphate = alpha-D-ribose 1-phosphate + guanine. The catalysed reaction is inosine + phosphate = alpha-D-ribose 1-phosphate + hypoxanthine. The enzyme catalyses thymidine + phosphate = 2-deoxy-alpha-D-ribose 1-phosphate + thymine. It carries out the reaction uridine + phosphate = alpha-D-ribose 1-phosphate + uracil. It catalyses the reaction xanthosine + phosphate = alpha-D-ribose 1-phosphate + xanthine. In terms of biological role, catalyzes the phosphorolysis of diverse nucleosides, yielding D-ribose 1-phosphate and the respective free bases. Can use uridine, adenosine, guanosine, cytidine, thymidine, inosine and xanthosine as substrates. Also catalyzes the reverse reactions. The polypeptide is Pyrimidine/purine nucleoside phosphorylase (Aeromonas salmonicida (strain A449)).